Consider the following 134-residue polypeptide: Large ribosomal subunit protein eL32 (134 aa).

Belongs to the eukaryotic ribosomal protein eL32 family.

This chain is Large ribosomal subunit protein eL32 (RpL32), found in Drosophila affinis (Fruit fly).